Consider the following 403-residue polypeptide: Flavohemoprotein (403 aa).

One can recognise a Globin domain in the interval 1-138 (MLTQKTKDIV…LADILAGMES (138 aa)). His-85 serves as a coordination point for heme b. Residues Tyr-95 and Glu-137 each act as charge relay system in the active site. Residues 149 to 403 (GGWAGWRRFI…EVFGPDLFAE (255 aa)) are reductase. One can recognise an FAD-binding FR-type domain in the interval 152–262 (AGWRRFIVRE…AAPYGNFYID (111 aa)). FAD is bound by residues Tyr-190 and 206 to 209 (RQYS). NADP(+) is bound at residue 275-280 (GVGLTP). Position 395 to 398 (395 to 398 (VFGP)) interacts with FAD.

Belongs to the globin family. Two-domain flavohemoproteins subfamily. The protein in the C-terminal section; belongs to the flavoprotein pyridine nucleotide cytochrome reductase family. It depends on heme b as a cofactor. Requires FAD as cofactor.

The catalysed reaction is 2 nitric oxide + NADPH + 2 O2 = 2 nitrate + NADP(+) + H(+). The enzyme catalyses 2 nitric oxide + NADH + 2 O2 = 2 nitrate + NAD(+) + H(+). Functionally, is involved in NO detoxification in an aerobic process, termed nitric oxide dioxygenase (NOD) reaction that utilizes O(2) and NAD(P)H to convert NO to nitrate, which protects the bacterium from various noxious nitrogen compounds. Therefore, plays a central role in the inducible response to nitrosative stress. The sequence is that of Flavohemoprotein from Rhizobium meliloti (strain 1021) (Ensifer meliloti).